Reading from the N-terminus, the 551-residue chain is Solute carrier family 22 member 3 (551 aa).

The chain crosses the membrane as a helical span at residues 21–41 (VFLLLCLTGVTFAFLFVGVVF). Asn72, Asn99, and Asn114 each carry an N-linked (GlcNAc...) asparagine glycan. Residues 177–197 (LIVYLISCFGVGITGVVVAFA) form a helical membrane-spanning segment. N-linked (GlcNAc...) asparagine glycosylation is present at Asn199. A run of 2 helical transmembrane segments spans residues 236-256 (IVGI…PGIA) and 264-284 (GIQL…WVVP). Residues 284-288 (PESPR) carry the Proline-rich sequence motif. N-linked (GlcNAc...) asparagine glycosylation occurs at Asn317. The next 3 helical transmembrane spans lie at 376–396 (MDFF…LLTI), 463–483 (FGVS…PFLL), and 493–513 (LPLI…MLLP).

Belongs to the major facilitator (TC 2.A.1) superfamily. Organic cation transporter (TC 2.A.1.19) family. Highly expressed in placenta. Expressed in intestine, hear, kidney and lung. Widely expressed in brain, particularly in hippocampus, cerebellum, cerebral cortex. In the brain, expressed predominantly in regions located at the brain-cerebrospinal fluid border, with expression extending to regions that belong to monoaminergic pathways such as raphe nuclei, striatum and thalamus. In brain, expressed in neurons and glial cells of amygdala. Expression is low in kidney and lung and undetectable in liver. Expressed in Sertoli cells in testis. Expressed in tracheal and bronchial epithelium of the respiratory tract, where it localizes to the apical membrane of ciliated and brush cells, and in basal cells.

The protein localises to the cell membrane. Its subcellular location is the apical cell membrane. It is found in the basolateral cell membrane. The protein resides in the mitochondrion membrane. It localises to the endomembrane system. The protein localises to the nucleus membrane. Its subcellular location is the nucleus outer membrane. It catalyses the reaction (R)-noradrenaline(out) = (R)-noradrenaline(in). The enzyme catalyses (R)-adrenaline(out) = (R)-adrenaline(in). The catalysed reaction is serotonin(out) = serotonin(in). It carries out the reaction dopamine(out) = dopamine(in). It catalyses the reaction histamine(out) = histamine(in). The enzyme catalyses tyramine(in) = tyramine(out). The catalysed reaction is guanidine(out) = guanidine(in). It carries out the reaction agmatine(out) = agmatine(in). It catalyses the reaction spermidine(in) = spermidine(out). The enzyme catalyses L-histidyl-L-proline diketopiperazine(in) = L-histidyl-L-proline diketopiperazine(out). The catalysed reaction is (R)-salsolinol(in) = (R)-salsolinol(out). Functionally, electrogenic voltage-dependent transporter that mediates the transport of a variety of organic cations such as endogenous bioactive amines, cationic drugs and xenobiotics. Cation cellular uptake or release is driven by the electrochemical potential, i.e. membrane potential and concentration gradient. Functions as a Na(+)- and Cl(-)-independent, bidirectional uniporter. Implicated in neuronal monoamine neurotransmitters cellular uptake such as dopamine, adrenaline/epinephrine, noradrenaline/norepinephrine, histamine, serotonin and tyramine, thereby supporting a role in homeostatic regulation of aminergic neurotransmission in the brain. Transports dopaminergic neuromodulators cyclo(his-pro) and salsolinol with low efficiency. May be involved in the uptake and disposition of cationic compounds by renal clearance from the blood flow. May contribute to regulate the transport of cationic compounds in testis across the blood-testis-barrier. Mediates the transport of polyamine spermidine and putrescine. Mediates the bidirectional transport of polyamine agmatine. Also transports guanidine. May also mediate intracellular transport of organic cations, thereby playing a role in amine metabolism and intracellular signaling. This Rattus norvegicus (Rat) protein is Solute carrier family 22 member 3.